A 141-amino-acid polypeptide reads, in one-letter code: Large ribosomal subunit protein uL14 (141 aa).

Belongs to the universal ribosomal protein uL14 family. In terms of assembly, part of the 50S ribosomal subunit. Forms a cluster with proteins L3 and L24e, part of which may contact the 16S rRNA in 2 intersubunit bridges.

Functionally, binds to 23S rRNA. Forms part of two intersubunit bridges in the 70S ribosome. This is Large ribosomal subunit protein uL14 from Pyrococcus furiosus (strain ATCC 43587 / DSM 3638 / JCM 8422 / Vc1).